Reading from the N-terminus, the 352-residue chain is Probable RNA methyltransferase Mpe_A3613 (352 aa).

The active-site Proton acceptor is the glutamate 88. The Radical SAM core domain occupies 91-317; it reads LLPRDGLCVS…TKLRRSAGQD (227 aa). A disulfide bridge connects residues cysteine 98 and cysteine 322. Residues cysteine 105, cysteine 109, and cysteine 112 each contribute to the [4Fe-4S] cluster site. Residues 150–151, serine 180, 203–205, and asparagine 279 each bind S-adenosyl-L-methionine; these read GE and SLH. The S-methylcysteine intermediate role is filled by cysteine 322.

The protein belongs to the radical SAM superfamily. RlmN family. Requires [4Fe-4S] cluster as cofactor.

The protein localises to the cytoplasm. The protein is Probable RNA methyltransferase Mpe_A3613 of Methylibium petroleiphilum (strain ATCC BAA-1232 / LMG 22953 / PM1).